We begin with the raw amino-acid sequence, 160 residues long: Cytochrome b6-f complex subunit 4 (160 aa).

A run of 3 helical transmembrane segments spans residues 36–56, 95–115, and 131–151; these read LLYIFPIVILGTIACIAGLAV, LLGVLLMASVPAGLLTVPFLE, and TVFLIGTVVAIWLGIGAALPI.

This sequence belongs to the cytochrome b family. PetD subfamily. In terms of assembly, the 4 large subunits of the cytochrome b6-f complex are cytochrome b6, subunit IV (17 kDa polypeptide, petD), cytochrome f and the Rieske protein, while the 4 small subunits are petG, petL, petM and petN. The complex functions as a dimer.

It localises to the plastid. The protein resides in the chloroplast thylakoid membrane. Functionally, component of the cytochrome b6-f complex, which mediates electron transfer between photosystem II (PSII) and photosystem I (PSI), cyclic electron flow around PSI, and state transitions. The chain is Cytochrome b6-f complex subunit 4 from Psilotum nudum (Whisk fern).